Reading from the N-terminus, the 134-residue chain is MVFAAWYLKFAGFVALIFSIIGGSMASSLVLPHASELKGVWQLSDKHQQCDVLLTDHPLPEGSIWSLNGDNDCLAYMFGEVPAGWRPTPDGLTITDEQGSGLAFFAHEPDGWFARFADGRELMIKPNKTSKKNE.

Residues 1–26 (MVFAAWYLKFAGFVALIFSIIGGSMA) form the signal peptide. A disulfide bridge connects residues C50 and C73.

This sequence belongs to the protease inhibitor I38 family.

It localises to the periplasm. In terms of biological role, inhibitor of the alkaline protease. This chain is Alkaline proteinase inhibitor (inh), found in Photorhabdus laumondii subsp. laumondii (strain DSM 15139 / CIP 105565 / TT01) (Photorhabdus luminescens subsp. laumondii).